The primary structure comprises 793 residues: Endonuclease MutS2 (793 aa).

ATP is bound at residue 329 to 336; it reads GPNTGGKT. The tract at residues 611-639 is disordered; it reads LARARQAVEPTEEEQRARRRGEVPRGLKP. Basic and acidic residues predominate over residues 623 to 639; the sequence is EEQRARRRGEVPRGLKP. The Smr domain maps to 717–792; it reads VDLRGLMVEE…GDGVTVAKLR (76 aa).

Belongs to the DNA mismatch repair MutS family. MutS2 subfamily. In terms of assembly, homodimer. Binds to stalled ribosomes, contacting rRNA.

Functionally, endonuclease that is involved in the suppression of homologous recombination and thus may have a key role in the control of bacterial genetic diversity. Acts as a ribosome collision sensor, splitting the ribosome into its 2 subunits. Detects stalled/collided 70S ribosomes which it binds and splits by an ATP-hydrolysis driven conformational change. Acts upstream of the ribosome quality control system (RQC), a ribosome-associated complex that mediates the extraction of incompletely synthesized nascent chains from stalled ribosomes and their subsequent degradation. Probably generates substrates for RQC. This Symbiobacterium thermophilum (strain DSM 24528 / JCM 14929 / IAM 14863 / T) protein is Endonuclease MutS2.